Consider the following 518-residue polypeptide: Laccase (518 aa).

The N-terminal stretch at 1 to 21 (MSRFQSLLSFVLVSLAAVANA) is a signal peptide. Plastocyanin-like domains follow at residues 23–148 (IGPV…FVVY) and 160–302 (IDND…ILRY). N-linked (GlcNAc...) asparagine glycosylation is found at Asn-72 and Asn-75. Residues His-85, His-87, His-130, and His-132 each contribute to the Cu cation site. 2 cysteine pairs are disulfide-bonded: Cys-106-Cys-507 and Cys-138-Cys-226. Asn-229 carries an N-linked (GlcNAc...) asparagine glycan. The interval 308 to 330 (VEPTTTQTTSTKPLNEADLHPLT) is disordered. N-linked (GlcNAc...) asparagine glycans are attached at residues Asn-354, Asn-362, and Asn-398. Residues 369-489 (SVPVLLQILS…AGFAVVLAED (121 aa)) form the Plastocyanin-like 3 domain. Positions 416, 419, 421, 471, 472, 473, and 477 each coordinate Cu cation.

The protein belongs to the multicopper oxidase family. Cu cation is required as a cofactor.

Its subcellular location is the secreted. It catalyses the reaction 4 hydroquinone + O2 = 4 benzosemiquinone + 2 H2O. Its function is as follows. Lignin degradation and detoxification of lignin-derived products. Cleaves the C-C and C-O bonds of some phenolic lignin model compounds (such as O- and P-quinols, aminophenols and phenylenediamine). May also be involved in synthesis of phenoxazinone pigments. The protein is Laccase (LCC3-1) of Pycnoporus cinnabarinus (Cinnabar-red polypore).